The chain runs to 610 residues: UvrABC system protein C (610 aa).

Residues 16-94 (SQPGVYRMYD…IKLYQPRYNV (79 aa)) enclose the GIY-YIG domain. Positions 204 to 239 (QQVLNQLISRMESASRDLRFEDAARIRDQIQAVRRV) constitute a UVR domain.

Belongs to the UvrC family. As to quaternary structure, interacts with UvrB in an incision complex.

The protein resides in the cytoplasm. In terms of biological role, the UvrABC repair system catalyzes the recognition and processing of DNA lesions. UvrC both incises the 5' and 3' sides of the lesion. The N-terminal half is responsible for the 3' incision and the C-terminal half is responsible for the 5' incision. The protein is UvrABC system protein C of Pectobacterium atrosepticum (strain SCRI 1043 / ATCC BAA-672) (Erwinia carotovora subsp. atroseptica).